A 295-amino-acid polypeptide reads, in one-letter code: Shikimate dehydrogenase (NADP(+)) (295 aa).

Residues 24–26 and Thr71 contribute to the shikimate site; that span reads SRS. Lys75 acts as the Proton acceptor in catalysis. Residue Glu87 participates in NADP(+) binding. 2 residues coordinate shikimate: Asn96 and Asp111. NADP(+)-binding positions include 136 to 140, 160 to 165, and Met233; these read GAGGA and NRTASR. Shikimate is bound at residue Tyr235. Position 256 (Gly256) interacts with NADP(+).

Belongs to the shikimate dehydrogenase family. Homodimer.

It carries out the reaction shikimate + NADP(+) = 3-dehydroshikimate + NADPH + H(+). It functions in the pathway metabolic intermediate biosynthesis; chorismate biosynthesis; chorismate from D-erythrose 4-phosphate and phosphoenolpyruvate: step 4/7. Functionally, involved in the biosynthesis of the chorismate, which leads to the biosynthesis of aromatic amino acids. Catalyzes the reversible NADPH linked reduction of 3-dehydroshikimate (DHSA) to yield shikimate (SA). This chain is Shikimate dehydrogenase (NADP(+)), found in Cupriavidus necator (strain ATCC 17699 / DSM 428 / KCTC 22496 / NCIMB 10442 / H16 / Stanier 337) (Ralstonia eutropha).